The primary structure comprises 304 residues: Coenzyme PQQ synthesis protein B (304 aa).

This sequence belongs to the PqqB family.

The protein operates within cofactor biosynthesis; pyrroloquinoline quinone biosynthesis. In terms of biological role, may be involved in the transport of PQQ or its precursor to the periplasm. The chain is Coenzyme PQQ synthesis protein B from Pseudomonas aeruginosa (strain LESB58).